The chain runs to 319 residues: Acetyl-coenzyme A carboxylase carboxyl transferase subunit alpha (319 aa).

The 258-residue stretch at glutamate 39–glutamate 296 folds into the CoA carboxyltransferase C-terminal domain.

This sequence belongs to the AccA family. Acetyl-CoA carboxylase is a heterohexamer composed of biotin carboxyl carrier protein (AccB), biotin carboxylase (AccC) and two subunits each of ACCase subunit alpha (AccA) and ACCase subunit beta (AccD).

The protein resides in the cytoplasm. It carries out the reaction N(6)-carboxybiotinyl-L-lysyl-[protein] + acetyl-CoA = N(6)-biotinyl-L-lysyl-[protein] + malonyl-CoA. It functions in the pathway lipid metabolism; malonyl-CoA biosynthesis; malonyl-CoA from acetyl-CoA: step 1/1. Component of the acetyl coenzyme A carboxylase (ACC) complex. First, biotin carboxylase catalyzes the carboxylation of biotin on its carrier protein (BCCP) and then the CO(2) group is transferred by the carboxyltransferase to acetyl-CoA to form malonyl-CoA. The polypeptide is Acetyl-coenzyme A carboxylase carboxyl transferase subunit alpha (Blochmanniella pennsylvanica (strain BPEN)).